The primary structure comprises 295 residues: MTNVTGTERVKRGMAEMQKGGVIMDVVNAEQAKIAEEAGAVAVMALERVPADIRAAGGVARMADPTIVEEVMGAVSIPVMAKCRIGHLVEARVLESLGVDYIDESEVLTPADEVNHLNKRDYTVPFVCGCRDIGEAARRIAEGASMLRTKGEPGTGNIVEAVRHMRQVNAEIRQVANLREDELMTYAKNTGAPYEVLLEIKRLGRLPVVNFAAGGVATPADAALMMQLGADGVFVGSGIFKSENPEKFARAIVEATTHYEDYELIANLSKGLGDAMKGVEISTLLPEQRMQERGW.

D25 contributes to the D-ribose 5-phosphate binding site. Catalysis depends on K82, which acts as the Schiff-base intermediate with D-ribose 5-phosphate. G154 is a D-ribose 5-phosphate binding site. Residue R166 coordinates D-glyceraldehyde 3-phosphate. D-ribose 5-phosphate contacts are provided by residues G215 and 236-237; that span reads GS.

The protein belongs to the PdxS/SNZ family. As to quaternary structure, in the presence of PdxT, forms a dodecamer of heterodimers.

The catalysed reaction is aldehydo-D-ribose 5-phosphate + D-glyceraldehyde 3-phosphate + L-glutamine = pyridoxal 5'-phosphate + L-glutamate + phosphate + 3 H2O + H(+). The protein operates within cofactor biosynthesis; pyridoxal 5'-phosphate biosynthesis. Its function is as follows. Catalyzes the formation of pyridoxal 5'-phosphate from ribose 5-phosphate (RBP), glyceraldehyde 3-phosphate (G3P) and ammonia. The ammonia is provided by the PdxT subunit. Can also use ribulose 5-phosphate and dihydroxyacetone phosphate as substrates, resulting from enzyme-catalyzed isomerization of RBP and G3P, respectively. The sequence is that of Pyridoxal 5'-phosphate synthase subunit PdxS from Bacillus cytotoxicus (strain DSM 22905 / CIP 110041 / 391-98 / NVH 391-98).